The sequence spans 103 residues: Pyrimidine/purine nucleoside phosphorylase (103 aa).

Belongs to the nucleoside phosphorylase PpnP family.

It catalyses the reaction a purine D-ribonucleoside + phosphate = a purine nucleobase + alpha-D-ribose 1-phosphate. It carries out the reaction adenosine + phosphate = alpha-D-ribose 1-phosphate + adenine. The catalysed reaction is cytidine + phosphate = cytosine + alpha-D-ribose 1-phosphate. The enzyme catalyses guanosine + phosphate = alpha-D-ribose 1-phosphate + guanine. It catalyses the reaction inosine + phosphate = alpha-D-ribose 1-phosphate + hypoxanthine. It carries out the reaction thymidine + phosphate = 2-deoxy-alpha-D-ribose 1-phosphate + thymine. The catalysed reaction is uridine + phosphate = alpha-D-ribose 1-phosphate + uracil. The enzyme catalyses xanthosine + phosphate = alpha-D-ribose 1-phosphate + xanthine. Its function is as follows. Catalyzes the phosphorolysis of diverse nucleosides, yielding D-ribose 1-phosphate and the respective free bases. Can use uridine, adenosine, guanosine, cytidine, thymidine, inosine and xanthosine as substrates. Also catalyzes the reverse reactions. The sequence is that of Pyrimidine/purine nucleoside phosphorylase from Shewanella putrefaciens (strain CN-32 / ATCC BAA-453).